A 711-amino-acid chain; its full sequence is Hepatocyte growth factor-like protein (711 aa).

Positions 1-18 (MGWLPLLLLLTQCLGVPG) are cleaved as a signal peptide. A PAN domain is found at 21 to 105 (SPLNDFQVLR…GRCDLFQKKD (85 aa)). 20 cysteine pairs are disulfide-bonded: cysteine 56–cysteine 78, cysteine 60–cysteine 66, cysteine 110–cysteine 186, cysteine 131–cysteine 169, cysteine 157–cysteine 181, cysteine 191–cysteine 268, cysteine 194–cysteine 324, cysteine 212–cysteine 251, cysteine 240–cysteine 263, cysteine 283–cysteine 361, cysteine 304–cysteine 343, cysteine 332–cysteine 355, cysteine 370–cysteine 448, cysteine 391–cysteine 431, cysteine 419–cysteine 443, cysteine 468–cysteine 588, cysteine 507–cysteine 523, cysteine 602–cysteine 667, cysteine 632–cysteine 646, and cysteine 657–cysteine 685. An N-linked (GlcNAc...) asparagine glycan is attached at asparagine 72. Kringle domains lie at 110–186 (CIMN…IKSC), 191–268 (CVWC…LPRC), 283–361 (CFRG…IRRC), and 370–448 (CYHG…LRRC). Asparagine 296 is a glycosylation site (N-linked (GlcNAc...) asparagine). The Peptidase S1 domain maps to 484 to 709 (VVGGHPGNSP…FVDWIHKVMR (226 aa)). Asparagine 615 carries an N-linked (GlcNAc...) asparagine glycan.

This sequence belongs to the peptidase S1 family. Plasminogen subfamily. In terms of assembly, dimer of an alpha chain and a beta chain linked by a disulfide bond. Interacts (via beta chain) with MST1R (via SEMA domain). In terms of processing, cleaved after Arg-483, probably by HPN/Hepsin, to yield the active form consisting of two disulfide-linked chains.

It is found in the secreted. In Homo sapiens (Human), this protein is Hepatocyte growth factor-like protein (MST1).